A 175-amino-acid chain; its full sequence is Ribosome maturation factor RimM (175 aa).

The 80-residue stretch at 96–175 folds into the PRC barrel domain; that stretch reads DGDYYWKDLI…IIKVDWDPEF (80 aa).

The protein belongs to the RimM family. In terms of assembly, binds ribosomal protein uS19.

It localises to the cytoplasm. An accessory protein needed during the final step in the assembly of 30S ribosomal subunit, possibly for assembly of the head region. Essential for efficient processing of 16S rRNA. May be needed both before and after RbfA during the maturation of 16S rRNA. It has affinity for free ribosomal 30S subunits but not for 70S ribosomes. The chain is Ribosome maturation factor RimM from Baumannia cicadellinicola subsp. Homalodisca coagulata.